A 540-amino-acid chain; its full sequence is DEAD-box ATP-dependent RNA helicase 57 (540 aa).

The interval 24–73 is disordered; that stretch reads DFARFRQGPPAPDVASAAAPSPEKKRKRQSKAKAKKSKKRRAEGADSASD. The segment covering 47–64 has biased composition (basic residues); the sequence is KKRKRQSKAKAKKSKKRR. A coiled-coil region spans residues 101-129; the sequence is KSEDSEVVRRRKEVEREIERAAILRKKFD. The Q motif signature appears at 146-174; the sequence is ELVSRYGCDSYLVGNLSKLGFQEPTPIQR. Positions 177–347 constitute a Helicase ATP-binding domain; sequence IPILLSGREC…RTIMHDAVRV (171 aa). Residue 190 to 197 coordinates ATP; the sequence is APTGSGKT. Positions 294–297 match the DEAD box motif; the sequence is DESD. A Helicase C-terminal domain is found at 375-519; that stretch reads ALRQSFAESL…EVPSWIKALP (145 aa).

The protein belongs to the DEAD box helicase family. DDX52/ROK1 subfamily.

It catalyses the reaction ATP + H2O = ADP + phosphate + H(+). This is DEAD-box ATP-dependent RNA helicase 57 from Oryza sativa subsp. japonica (Rice).